The following is a 588-amino-acid chain: Catechol oxidase B, chloroplastic (588 aa).

The N-terminal 88 residues, 1–88 (SSSSTTTIPL…AANLAPLASA (88 aa)), are a transit peptide targeting the chloroplast. Intrachain disulfides connect cysteine 99-cysteine 115 and cysteine 114-cysteine 181. The Cu cation site is built by histidine 180, histidine 198, histidine 207, histidine 329, histidine 333, and histidine 364. The 2'-(S-cysteinyl)-histidine (Cys-His) cross-link spans 184-198 (CNGAYKVGGKELQVH).

It belongs to the tyrosinase family. Cu(2+) serves as cofactor.

The protein localises to the plastid. It localises to the chloroplast thylakoid lumen. The catalysed reaction is 2 catechol + O2 = 2 1,2-benzoquinone + 2 H2O. In terms of biological role, catalyzes the oxidation of mono- and o-diphenols to o-diquinones. The polypeptide is Catechol oxidase B, chloroplastic (Solanum tuberosum (Potato)).